Consider the following 336-residue polypeptide: MGVDLGDILSKKKISLENLSGCWIAVDGFNTLYQFLSIIRQPDGTPLMDASGRVTSHLSGLLYRMTNLIEVGIRVAFVFDGTPPELKAGTLAARAQMKEAAEIQLQEAIATGVDSFRYAQATARINSEILHDSIRLLDAMGIPYVQAPSEGEAQAAFMAIRGDVDYVASQDYDSLLFGAPRVVRNLAITGRRKMPRKNIYIDVPPEVIILEEELTRLGISREQLIDIGIMCGTDYNRGLPKVGPKRALKLIREHGCLEAVLDALGESIENFREIRELFLHPAVTESYELRMRKPMVDEIVGFLCNERNFSEDRVRKAAERLNASYRSGQSTLERWL.

Residues methionine 1–lysine 98 form an N-domain region. Aspartate 27, aspartate 80, glutamate 150, glutamate 152, aspartate 171, aspartate 173, and aspartate 234 together coordinate Mg(2+). The segment at aspartate 114–glycine 255 is I-domain. An interaction with PCNA region spans residues glycine 328–leucine 336.

This sequence belongs to the XPG/RAD2 endonuclease family. FEN1 subfamily. As to quaternary structure, interacts with PCNA. PCNA stimulates the nuclease activity without altering cleavage specificity. It depends on Mg(2+) as a cofactor.

In terms of biological role, structure-specific nuclease with 5'-flap endonuclease and 5'-3' exonuclease activities involved in DNA replication and repair. During DNA replication, cleaves the 5'-overhanging flap structure that is generated by displacement synthesis when DNA polymerase encounters the 5'-end of a downstream Okazaki fragment. Binds the unpaired 3'-DNA end and kinks the DNA to facilitate 5' cleavage specificity. Cleaves one nucleotide into the double-stranded DNA from the junction in flap DNA, leaving a nick for ligation. Also involved in the base excision repair (BER) pathway. Acts as a genome stabilization factor that prevents flaps from equilibrating into structures that lead to duplications and deletions. Also possesses 5'-3' exonuclease activity on nicked or gapped double-stranded DNA. In Methanothrix thermoacetophila (strain DSM 6194 / JCM 14653 / NBRC 101360 / PT) (Methanosaeta thermophila), this protein is Flap endonuclease 1.